Here is a 172-residue protein sequence, read N- to C-terminus: 3-hydroxydecanoyl-[acyl-carrier-protein] dehydratase (172 aa).

His71 is an active-site residue.

Belongs to the thioester dehydratase family. FabA subfamily. As to quaternary structure, homodimer.

Its subcellular location is the cytoplasm. It carries out the reaction a (3R)-hydroxyacyl-[ACP] = a (2E)-enoyl-[ACP] + H2O. It catalyses the reaction (3R)-hydroxydecanoyl-[ACP] = (2E)-decenoyl-[ACP] + H2O. The enzyme catalyses (2E)-decenoyl-[ACP] = (3Z)-decenoyl-[ACP]. It participates in lipid metabolism; fatty acid biosynthesis. In terms of biological role, necessary for the introduction of cis unsaturation into fatty acids. Catalyzes the dehydration of (3R)-3-hydroxydecanoyl-ACP to E-(2)-decenoyl-ACP and then its isomerization to Z-(3)-decenoyl-ACP. Can catalyze the dehydratase reaction for beta-hydroxyacyl-ACPs with saturated chain lengths up to 16:0, being most active on intermediate chain length. The protein is 3-hydroxydecanoyl-[acyl-carrier-protein] dehydratase of Vibrio vulnificus (strain CMCP6).